A 427-amino-acid polypeptide reads, in one-letter code: Peptidase B (427 aa).

2 residues coordinate Mn(2+): lysine 195 and aspartate 200. Lysine 207 is a catalytic residue. 3 residues coordinate Mn(2+): aspartate 218, aspartate 277, and glutamate 279. The active site involves arginine 281.

It belongs to the peptidase M17 family. Homohexamer. It depends on Mn(2+) as a cofactor.

Its subcellular location is the cytoplasm. The catalysed reaction is Release of an N-terminal amino acid, Xaa, from a peptide or arylamide. Xaa is preferably Glu or Asp but may be other amino acids, including Leu, Met, His, Cys and Gln.. Functionally, probably plays an important role in intracellular peptide degradation. The polypeptide is Peptidase B (Escherichia coli O127:H6 (strain E2348/69 / EPEC)).